The primary structure comprises 292 residues: Phosphatidylserine decarboxylase proenzyme (292 aa).

Catalysis depends on charge relay system; for autoendoproteolytic cleavage activity residues Asp-89, His-146, and Ser-252. The Schiff-base intermediate with substrate; via pyruvic acid; for decarboxylase activity role is filled by Ser-252. Ser-252 carries the post-translational modification Pyruvic acid (Ser); by autocatalysis.

This sequence belongs to the phosphatidylserine decarboxylase family. PSD-B subfamily. Prokaryotic type I sub-subfamily. As to quaternary structure, heterodimer of a large membrane-associated beta subunit and a small pyruvoyl-containing alpha subunit. Pyruvate serves as cofactor. Is synthesized initially as an inactive proenzyme. Formation of the active enzyme involves a self-maturation process in which the active site pyruvoyl group is generated from an internal serine residue via an autocatalytic post-translational modification. Two non-identical subunits are generated from the proenzyme in this reaction, and the pyruvate is formed at the N-terminus of the alpha chain, which is derived from the carboxyl end of the proenzyme. The autoendoproteolytic cleavage occurs by a canonical serine protease mechanism, in which the side chain hydroxyl group of the serine supplies its oxygen atom to form the C-terminus of the beta chain, while the remainder of the serine residue undergoes an oxidative deamination to produce ammonia and the pyruvoyl prosthetic group on the alpha chain. During this reaction, the Ser that is part of the protease active site of the proenzyme becomes the pyruvoyl prosthetic group, which constitutes an essential element of the active site of the mature decarboxylase.

It localises to the cell membrane. It catalyses the reaction a 1,2-diacyl-sn-glycero-3-phospho-L-serine + H(+) = a 1,2-diacyl-sn-glycero-3-phosphoethanolamine + CO2. The protein operates within phospholipid metabolism; phosphatidylethanolamine biosynthesis; phosphatidylethanolamine from CDP-diacylglycerol: step 2/2. In terms of biological role, catalyzes the formation of phosphatidylethanolamine (PtdEtn) from phosphatidylserine (PtdSer). This chain is Phosphatidylserine decarboxylase proenzyme, found in Shewanella sp. (strain ANA-3).